The primary structure comprises 237 residues: 1-(5-phosphoribosyl)-5-[(5-phosphoribosylamino)methylideneamino] imidazole-4-carboxamide isomerase (237 aa).

Asp-8 serves as the catalytic Proton acceptor. Asp-129 serves as the catalytic Proton donor.

This sequence belongs to the HisA/HisF family.

The protein resides in the cytoplasm. It carries out the reaction 1-(5-phospho-beta-D-ribosyl)-5-[(5-phospho-beta-D-ribosylamino)methylideneamino]imidazole-4-carboxamide = 5-[(5-phospho-1-deoxy-D-ribulos-1-ylimino)methylamino]-1-(5-phospho-beta-D-ribosyl)imidazole-4-carboxamide. It participates in amino-acid biosynthesis; L-histidine biosynthesis; L-histidine from 5-phospho-alpha-D-ribose 1-diphosphate: step 4/9. The polypeptide is 1-(5-phosphoribosyl)-5-[(5-phosphoribosylamino)methylideneamino] imidazole-4-carboxamide isomerase (Roseiflexus sp. (strain RS-1)).